Consider the following 142-residue polypeptide: Large-conductance mechanosensitive channel (142 aa).

Transmembrane regions (helical) follow at residues 19–39 (VGII…ADLV), 41–61 (PFIA…ALDG), and 78–98 (FAFG…FVVF).

Belongs to the MscL family. Homopentamer.

Its subcellular location is the cell inner membrane. Channel that opens in response to stretch forces in the membrane lipid bilayer. May participate in the regulation of osmotic pressure changes within the cell. This chain is Large-conductance mechanosensitive channel, found in Roseobacter denitrificans (strain ATCC 33942 / OCh 114) (Erythrobacter sp. (strain OCh 114)).